The primary structure comprises 430 residues: Forkhead box protein N2 (430 aa).

A disordered region spans residues 1 to 47 (MGPATGMTPDKNIESPTAEKVPGLSQTENMGSLPEEVGAARPKASMV). Positions 108 to 204 (KPPYSFSLLI…QALKKQPFSS (97 aa)) form a DNA-binding region, fork-head. Disordered regions lie at residues 299-326 (NIDP…SVSS) and 338-391 (PKNS…EASQ). Residues 355-366 (DDTDIDYEEDTL) show a composition bias toward acidic residues. Residues 381–390 (HGSKLRKEAS) are compositionally biased toward basic and acidic residues.

As to expression, expressed in the developing eye from stage 23. Localized to the prospective retinal layer and a layer of cells lateral to the ventricular zone. At stage 29, expression extends to the branchial arches and the brain. At stage 33/34, expressed in the vagal ganglion. At stage 36, expression in the retina decreases. Not expressed in the eye lens.

It localises to the nucleus. The chain is Forkhead box protein N2 from Xenopus laevis (African clawed frog).